We begin with the raw amino-acid sequence, 535 residues long: Bifunctional purine biosynthesis protein PurH (535 aa).

The MGS-like domain maps to 6-151; that stretch reads TRLPVRRALI…KNHKDVAIVV (146 aa).

It belongs to the PurH family.

It catalyses the reaction (6R)-10-formyltetrahydrofolate + 5-amino-1-(5-phospho-beta-D-ribosyl)imidazole-4-carboxamide = 5-formamido-1-(5-phospho-D-ribosyl)imidazole-4-carboxamide + (6S)-5,6,7,8-tetrahydrofolate. It carries out the reaction IMP + H2O = 5-formamido-1-(5-phospho-D-ribosyl)imidazole-4-carboxamide. It participates in purine metabolism; IMP biosynthesis via de novo pathway; 5-formamido-1-(5-phospho-D-ribosyl)imidazole-4-carboxamide from 5-amino-1-(5-phospho-D-ribosyl)imidazole-4-carboxamide (10-formyl THF route): step 1/1. Its pathway is purine metabolism; IMP biosynthesis via de novo pathway; IMP from 5-formamido-1-(5-phospho-D-ribosyl)imidazole-4-carboxamide: step 1/1. This chain is Bifunctional purine biosynthesis protein PurH, found in Ectopseudomonas mendocina (strain ymp) (Pseudomonas mendocina).